The primary structure comprises 419 residues: DNA ligase (419 aa).

Residues 1-120 (MLSQFPGQCS…ARQKRGAHTN (120 aa)) form an NTD region. The segment at 121-317 (RGMIPPMLVK…NYHSPHLAKL (197 aa)) is AD domain. Positions 149, 151, 203, and 232 each coordinate ATP. K151 serves as the catalytic N6-AMP-lysine intermediate. E203 lines the a divalent metal cation pocket. E291 serves as a coordination point for a divalent metal cation. Residues I294 and K316 each contribute to the ATP site. An OB domain region spans residues 318-419 (KPLLDAEFIL…REPINVLEII (102 aa)).

It belongs to the ATP-dependent DNA ligase family. A divalent metal cation is required as a cofactor.

Its subcellular location is the virion. It catalyses the reaction ATP + (deoxyribonucleotide)n-3'-hydroxyl + 5'-phospho-(deoxyribonucleotide)m = (deoxyribonucleotide)n+m + AMP + diphosphate.. Functionally, very low-fidelity DNA ligase that seals nicks in double-stranded DNA during DNA repair. Together with the viral repair DNA polymerase X, fills the single nucleotide gaps generated by the AP endonuclease. It is not essential for viral replication and recombination. Displays a very low adenylation activity towards DNA with 3'-dideoxy- or 3'-amino-terminated nicks compared to regular nick DNA. The chain is DNA ligase (LIG) from Ornithodoros (relapsing fever ticks).